A 348-amino-acid polypeptide reads, in one-letter code: Protein-arginine N-acetylglucosaminyltransferase SseK2 (348 aa).

UDP-N-acetyl-alpha-D-glucosamine contacts are provided by residues 64-66, Tyr88, and 237-240; these read QWF and YLDA. Positions 239–241 match the DXD motif motif; that stretch reads DAD. Asp241 is a Mn(2+) binding site. Glu271 functions as the Proton acceptor in the catalytic mechanism. UDP-N-acetyl-alpha-D-glucosamine-binding positions include Asn338, Ser340, and 345 to 348; that span reads SSWR. Asn338 and Ser340 together coordinate Mn(2+).

This sequence belongs to the glycosyltransferase NleB family. It depends on Mn(2+) as a cofactor.

Its subcellular location is the secreted. It is found in the host Golgi apparatus. The catalysed reaction is L-arginyl-[protein] + UDP-N-acetyl-alpha-D-glucosamine = N(omega)-(N-acetyl-beta-D-glucosaminyl)-L-arginyl-[protein] + UDP + H(+). Protein-arginine N-acetylglucosaminyltransferase activity is inhibited by 100066N compound (flavone analog) and 102644N compound (a substituted isoxazole). Functionally, protein-arginine N-acetylglucosaminyltransferase effector that catalyzes the transfer of a single N-acetylglucosamine (GlcNAc) to a conserved arginine residue in the death domain of host proteins such as FADD: arginine GlcNAcylation prevents homotypic/heterotypic death domain interactions. Also acts on host proteins without a death domain: catalyzes arginine GlcNAcylation of host small Rab1 GTPase, thereby preventing GTPase activity and leading to impaired host vesicular protein transport. In contrast to Ssek1, not able to disrupt TNF signaling in infected cells. In Salmonella typhimurium (strain SL1344), this protein is Protein-arginine N-acetylglucosaminyltransferase SseK2.